Reading from the N-terminus, the 342-residue chain is Methionyl-tRNA formyltransferase (342 aa).

(6S)-5,6,7,8-tetrahydrofolate is bound at residue 119–122 (SILP).

It belongs to the Fmt family.

It catalyses the reaction L-methionyl-tRNA(fMet) + (6R)-10-formyltetrahydrofolate = N-formyl-L-methionyl-tRNA(fMet) + (6S)-5,6,7,8-tetrahydrofolate + H(+). Functionally, attaches a formyl group to the free amino group of methionyl-tRNA(fMet). The formyl group appears to play a dual role in the initiator identity of N-formylmethionyl-tRNA by promoting its recognition by IF2 and preventing the misappropriation of this tRNA by the elongation apparatus. This chain is Methionyl-tRNA formyltransferase, found in Nostoc sp. (strain PCC 7120 / SAG 25.82 / UTEX 2576).